The chain runs to 554 residues: Inactive serine/threonine-protein kinase/endoribonuclease IRE1-like (554 aa).

A signal peptide spans 1–17; that stretch reads MWLLAISLVGLLVVVVC. The interval 36–85 is disordered; the sequence is KRDKNSAPRVSASGEDGTKNEQVEKKSDPSGGLGEENEKTNSESKVLSVP. The span at 51–63 shows a compositional bias: basic and acidic residues; that stretch reads DGTKNEQVEKKSD. The Protein kinase domain occupies 121–408; sequence LVSTNEMKYG…ATQVLLHPLF (288 aa). Lys150 provides a ligand contact to ATP. The region spanning 411–554 is the KEN domain; it reads SEKRLFFLRE…GEEAFEKYFN (144 aa).

This sequence belongs to the protein kinase superfamily. Ser/Thr protein kinase family.

The sequence is that of Inactive serine/threonine-protein kinase/endoribonuclease IRE1-like from Arabidopsis thaliana (Mouse-ear cress).